We begin with the raw amino-acid sequence, 495 residues long: Glycerol kinase (495 aa).

Thr-11 provides a ligand contact to ADP. Thr-11, Thr-12, and Ser-13 together coordinate ATP. Thr-11 provides a ligand contact to sn-glycerol 3-phosphate. Arg-15 serves as a coordination point for ADP. 4 residues coordinate sn-glycerol 3-phosphate: Arg-81, Glu-82, Tyr-133, and Asp-242. Glycerol is bound by residues Arg-81, Glu-82, Tyr-133, Asp-242, and Gln-243. ADP-binding residues include Thr-264 and Gly-307. 4 residues coordinate ATP: Thr-264, Gly-307, Gln-311, and Gly-408. ADP is bound by residues Gly-408 and Asn-412.

This sequence belongs to the FGGY kinase family.

The catalysed reaction is glycerol + ATP = sn-glycerol 3-phosphate + ADP + H(+). The protein operates within polyol metabolism; glycerol degradation via glycerol kinase pathway; sn-glycerol 3-phosphate from glycerol: step 1/1. Inhibited by fructose 1,6-bisphosphate (FBP). Functionally, key enzyme in the regulation of glycerol uptake and metabolism. Catalyzes the phosphorylation of glycerol to yield sn-glycerol 3-phosphate. This is Glycerol kinase from Rhodospirillum rubrum (strain ATCC 11170 / ATH 1.1.1 / DSM 467 / LMG 4362 / NCIMB 8255 / S1).